The sequence spans 191 residues: NAD(P)H-quinone oxidoreductase subunit 6, chloroplastic (191 aa).

Transmembrane regions (helical) follow at residues 10 to 30, 32 to 52, 61 to 81, 89 to 109, and 153 to 173; these read TIFL…ILLT, IVYS…LYLL, AQIL…VMLI, FFVY…SIFL, and FLLP…GAIT.

This sequence belongs to the complex I subunit 6 family. NDH is composed of at least 16 different subunits, 5 of which are encoded in the nucleus.

It is found in the plastid. It localises to the chloroplast thylakoid membrane. It carries out the reaction a plastoquinone + NADH + (n+1) H(+)(in) = a plastoquinol + NAD(+) + n H(+)(out). It catalyses the reaction a plastoquinone + NADPH + (n+1) H(+)(in) = a plastoquinol + NADP(+) + n H(+)(out). NDH shuttles electrons from NAD(P)H:plastoquinone, via FMN and iron-sulfur (Fe-S) centers, to quinones in the photosynthetic chain and possibly in a chloroplast respiratory chain. The immediate electron acceptor for the enzyme in this species is believed to be plastoquinone. Couples the redox reaction to proton translocation, and thus conserves the redox energy in a proton gradient. This is NAD(P)H-quinone oxidoreductase subunit 6, chloroplastic (ndhG) from Marchantia polymorpha (Common liverwort).